The chain runs to 227 residues: 7-cyano-7-deazaguanine synthase (227 aa).

16–26 (FSGGQDSTTCL) is a binding site for ATP. Zn(2+)-binding residues include Cys-194, Cys-202, Cys-205, and Cys-208.

The protein belongs to the QueC family. Zn(2+) is required as a cofactor.

It catalyses the reaction 7-carboxy-7-deazaguanine + NH4(+) + ATP = 7-cyano-7-deazaguanine + ADP + phosphate + H2O + H(+). The protein operates within purine metabolism; 7-cyano-7-deazaguanine biosynthesis. Its function is as follows. Catalyzes the ATP-dependent conversion of 7-carboxy-7-deazaguanine (CDG) to 7-cyano-7-deazaguanine (preQ(0)). This is 7-cyano-7-deazaguanine synthase from Haemophilus influenzae (strain 86-028NP).